A 164-amino-acid chain; its full sequence is C-type natriuretic peptide (164 aa).

The first 23 residues, 1–23, serve as a signal peptide directing secretion; sequence MVASRLAAGGLLLLALLALALDG. 2 disordered regions span residues 24–93 and 115–134; these read KPAP…AAAA and HPEHHAGGGGGGGGGGGASR. Residues 24–142 constitute a propeptide that is removed on maturation; it reads KPAPPQPLRK…SRRLKGVAKK (119 aa). The span at 58–67 shows a compositional bias: gly residues; that stretch reads AGGGGGGGRS. Over residues 68-93 the composition is skewed to low complexity; that stretch reads GSKAANAAPTAPKSKGGAAAAAAAAA. Over residues 121 to 132 the composition is skewed to gly residues; it reads GGGGGGGGGGGA. The cysteines at positions 148 and 164 are disulfide-linked.

The protein belongs to the natriuretic peptide family. As to expression, expressed by the venom gland.

Its subcellular location is the secreted. Its function is as follows. Snake venom natriuretic peptide that has a vasorelaxant activity in rat aortic strips and a diuretic potency in anesthetized rats. May act by activating natriuretic receptors (NPR1 and/or NPR2). The polypeptide is C-type natriuretic peptide (Philodryas olfersii (Green snake)).